The chain runs to 116 residues: Flagellar transcriptional regulator FlhD (116 aa).

The protein belongs to the FlhD family. As to quaternary structure, homodimer; disulfide-linked. Forms a heterohexamer composed of two FlhC and four FlhD subunits. Each FlhC binds a FlhD dimer, forming a heterotrimer, and a hexamer assembles by dimerization of two heterotrimers.

The protein localises to the cytoplasm. In terms of biological role, functions in complex with FlhC as a master transcriptional regulator that regulates transcription of several flagellar and non-flagellar operons by binding to their promoter region. Activates expression of class 2 flagellar genes, including fliA, which is a flagellum-specific sigma factor that turns on the class 3 genes. Also regulates genes whose products function in a variety of physiological pathways. The chain is Flagellar transcriptional regulator FlhD from Pantoea ananatis (strain LMG 20103).